The sequence spans 319 residues: Lipooligosaccharide heptosyltransferase 2 (319 aa).

This sequence belongs to the glycosyltransferase 9 family.

The catalysed reaction is an L-alpha-D-Hep-(1-&gt;5)-[alpha-Kdo-(2-&gt;4)]-alpha-Kdo-(2-&gt;6)-lipid A + ADP-L-glycero-beta-D-manno-heptose = an L-alpha-D-Hep-(1-&gt;3)-L-alpha-D-Hep-(1-&gt;5)-[alpha-Kdo-(2-&gt;4)]-alpha-Kdo-(2-&gt;6)-lipid A + ADP + H(+). It participates in bacterial outer membrane biogenesis; LOS core biosynthesis. Functionally, glycosyltransferase involved in the biosynthesis of the core oligosaccharide region of lipooligosaccharide (LOS). Catalyzes the addition of the second heptose unit to the heptosyl-Kdo2-lipid A module. This is Lipooligosaccharide heptosyltransferase 2 from Campylobacter jejuni subsp. jejuni serotype O:2 (strain ATCC 700819 / NCTC 11168).